The following is an 807-amino-acid chain: Probable dimethyl sulfoxide reductase chain YnfF (807 aa).

Residues 1 to 45 (MKIHTTEALMKAEISRRSLMKTSALGSLALASSAFTLPFSQMVRA) constitute a signal peptide (tat-type signal). The 4Fe-4S Mo/W bis-MGD-type domain maps to 52-113 (EKAVWSSCTV…SIRRRMNHPD (62 aa)). Residues Cys59, Cys63, Cys67, and Cys99 each coordinate [4Fe-4S] cluster. A Mo-bis(molybdopterin guanine dinucleotide)-binding site is contributed by Ser195.

The protein belongs to the prokaryotic molybdopterin-containing oxidoreductase family. The complex consists of three subunits: YnfF, the reductase; YnfG, an electron transfer protein, and YnfH, a membrane anchor protein. [4Fe-4S] cluster serves as cofactor. The cofactor is Mo-bis(molybdopterin guanine dinucleotide). Exported by the Tat system. The position of the signal peptide cleavage has not been experimentally proven. Can also be exported by the Sec system.

It localises to the cell membrane. In terms of biological role, terminal reductase during anaerobic growth on various sulfoxide and N-oxide compounds. The protein is Probable dimethyl sulfoxide reductase chain YnfF (ynfF) of Escherichia coli (strain K12).